A 296-amino-acid polypeptide reads, in one-letter code: Ribosomal RNA small subunit methyltransferase A (296 aa).

S-adenosyl-L-methionine-binding residues include Asn-31, Leu-33, Gly-58, Glu-79, Asp-111, and Asn-136.

The protein belongs to the class I-like SAM-binding methyltransferase superfamily. rRNA adenine N(6)-methyltransferase family. RsmA subfamily.

It is found in the cytoplasm. The catalysed reaction is adenosine(1518)/adenosine(1519) in 16S rRNA + 4 S-adenosyl-L-methionine = N(6)-dimethyladenosine(1518)/N(6)-dimethyladenosine(1519) in 16S rRNA + 4 S-adenosyl-L-homocysteine + 4 H(+). In terms of biological role, specifically dimethylates two adjacent adenosines (A1518 and A1519) in the loop of a conserved hairpin near the 3'-end of 16S rRNA in the 30S particle. May play a critical role in biogenesis of 30S subunits. This is Ribosomal RNA small subunit methyltransferase A from Lactobacillus delbrueckii subsp. bulgaricus (strain ATCC BAA-365 / Lb-18).